We begin with the raw amino-acid sequence, 191 residues long: Signal peptidase IB (191 aa).

At 1–7 the chain is on the cytoplasmic side; sequence MKKELLE. The chain crosses the membrane as a helical span at residues 8-28; it reads WIISIAVAFVILFIVGKFIVT. The Extracellular segment spans residues 29-191; it reads PYTIKGESMD…HNFNPENTKN (163 aa). Catalysis depends on residues serine 36 and lysine 77.

It belongs to the peptidase S26 family.

It localises to the cell membrane. It carries out the reaction Cleavage of hydrophobic, N-terminal signal or leader sequences from secreted and periplasmic proteins.. Essential for cell viability. The chain is Signal peptidase IB (spsB) from Staphylococcus aureus (strain Mu50 / ATCC 700699).